The primary structure comprises 720 residues: Methionine--tRNA ligase (720 aa).

A 'HIGH' region motif is present at residues 27 to 37 (PYANGQIHIGH). Zn(2+)-binding residues include Cys158, Cys161, Cys171, and Cys174. The 'KMSKS' region motif lies at 348–352 (KMSKS). Lys351 contacts ATP. The tRNA-binding domain occupies 614–720 (DFAKIDLRIA…SGAKPGMRVK (107 aa)).

This sequence belongs to the class-I aminoacyl-tRNA synthetase family. MetG type 1 subfamily. In terms of assembly, homodimer. Requires Zn(2+) as cofactor.

Its subcellular location is the cytoplasm. It catalyses the reaction tRNA(Met) + L-methionine + ATP = L-methionyl-tRNA(Met) + AMP + diphosphate. Its function is as follows. Is required not only for elongation of protein synthesis but also for the initiation of all mRNA translation through initiator tRNA(fMet) aminoacylation. The polypeptide is Methionine--tRNA ligase (Burkholderia lata (strain ATCC 17760 / DSM 23089 / LMG 22485 / NCIMB 9086 / R18194 / 383)).